We begin with the raw amino-acid sequence, 90 residues long: Probable Fe(2+)-trafficking protein (90 aa).

Belongs to the Fe(2+)-trafficking protein family.

In terms of biological role, could be a mediator in iron transactions between iron acquisition and iron-requiring processes, such as synthesis and/or repair of Fe-S clusters in biosynthetic enzymes. The sequence is that of Probable Fe(2+)-trafficking protein from Cupriavidus taiwanensis (strain DSM 17343 / BCRC 17206 / CCUG 44338 / CIP 107171 / LMG 19424 / R1) (Ralstonia taiwanensis (strain LMG 19424)).